We begin with the raw amino-acid sequence, 485 residues long: Ribulose bisphosphate carboxylase large chain (485 aa).

A propeptide spanning residues 1–2 is cleaved from the precursor; that stretch reads MS. Pro-3 is subject to N-acetylproline. The residue at position 14 (Lys-14) is an N6,N6,N6-trimethyllysine. The substrate site is built by Asn-123 and Thr-173. Residue Lys-175 is the Proton acceptor of the active site. Residue Lys-177 participates in substrate binding. Mg(2+) is bound by residues Lys-201, Asp-203, and Glu-204. Lys-201 is subject to N6-carboxylysine. The active-site Proton acceptor is the His-294. Residues Arg-295, His-327, and Ser-379 each contribute to the substrate site.

It belongs to the RuBisCO large chain family. Type I subfamily. Heterohexadecamer of 8 large chains and 8 small chains; disulfide-linked. The disulfide link is formed within the large subunit homodimers. Requires Mg(2+) as cofactor. Post-translationally, the disulfide bond which can form in the large chain dimeric partners within the hexadecamer appears to be associated with oxidative stress and protein turnover.

The protein localises to the plastid. Its subcellular location is the chloroplast. The catalysed reaction is 2 (2R)-3-phosphoglycerate + 2 H(+) = D-ribulose 1,5-bisphosphate + CO2 + H2O. The enzyme catalyses D-ribulose 1,5-bisphosphate + O2 = 2-phosphoglycolate + (2R)-3-phosphoglycerate + 2 H(+). Its function is as follows. RuBisCO catalyzes two reactions: the carboxylation of D-ribulose 1,5-bisphosphate, the primary event in carbon dioxide fixation, as well as the oxidative fragmentation of the pentose substrate in the photorespiration process. Both reactions occur simultaneously and in competition at the same active site. The polypeptide is Ribulose bisphosphate carboxylase large chain (Bartlettina sordida (Purple torch)).